A 317-amino-acid polypeptide reads, in one-letter code: Acetyl-coenzyme A carboxylase carboxyl transferase subunit alpha (317 aa).

Residues 40–293 (LEGRVRDAMV…EAVIGDALKE (254 aa)) form the CoA carboxyltransferase C-terminal domain.

The protein belongs to the AccA family. In terms of assembly, acetyl-CoA carboxylase is a heterohexamer composed of biotin carboxyl carrier protein (AccB), biotin carboxylase (AccC) and two subunits each of ACCase subunit alpha (AccA) and ACCase subunit beta (AccD).

It is found in the cytoplasm. It catalyses the reaction N(6)-carboxybiotinyl-L-lysyl-[protein] + acetyl-CoA = N(6)-biotinyl-L-lysyl-[protein] + malonyl-CoA. It participates in lipid metabolism; malonyl-CoA biosynthesis; malonyl-CoA from acetyl-CoA: step 1/1. In terms of biological role, component of the acetyl coenzyme A carboxylase (ACC) complex. First, biotin carboxylase catalyzes the carboxylation of biotin on its carrier protein (BCCP) and then the CO(2) group is transferred by the carboxyltransferase to acetyl-CoA to form malonyl-CoA. In Sinorhizobium medicae (strain WSM419) (Ensifer medicae), this protein is Acetyl-coenzyme A carboxylase carboxyl transferase subunit alpha.